A 378-amino-acid polypeptide reads, in one-letter code: Queuine tRNA-ribosyltransferase (378 aa).

The Proton acceptor role is filled by Asp-91. Substrate is bound by residues 91 to 95 (DSGGF), Asp-145, Gln-189, and Gly-216. Residues 247 to 253 (GVGKPED) form an RNA binding region. Asp-266 functions as the Nucleophile in the catalytic mechanism. Residues 271–275 (TRNAR) are RNA binding; important for wobble base 34 recognition. Cys-304, Cys-306, Cys-309, and His-335 together coordinate Zn(2+).

The protein belongs to the queuine tRNA-ribosyltransferase family. In terms of assembly, homodimer. Within each dimer, one monomer is responsible for RNA recognition and catalysis, while the other monomer binds to the replacement base PreQ1. Zn(2+) serves as cofactor.

The catalysed reaction is 7-aminomethyl-7-carbaguanine + guanosine(34) in tRNA = 7-aminomethyl-7-carbaguanosine(34) in tRNA + guanine. It participates in tRNA modification; tRNA-queuosine biosynthesis. Functionally, catalyzes the base-exchange of a guanine (G) residue with the queuine precursor 7-aminomethyl-7-deazaguanine (PreQ1) at position 34 (anticodon wobble position) in tRNAs with GU(N) anticodons (tRNA-Asp, -Asn, -His and -Tyr). Catalysis occurs through a double-displacement mechanism. The nucleophile active site attacks the C1' of nucleotide 34 to detach the guanine base from the RNA, forming a covalent enzyme-RNA intermediate. The proton acceptor active site deprotonates the incoming PreQ1, allowing a nucleophilic attack on the C1' of the ribose to form the product. After dissociation, two additional enzymatic reactions on the tRNA convert PreQ1 to queuine (Q), resulting in the hypermodified nucleoside queuosine (7-(((4,5-cis-dihydroxy-2-cyclopenten-1-yl)amino)methyl)-7-deazaguanosine). This is Queuine tRNA-ribosyltransferase from Vibrio campbellii (strain ATCC BAA-1116).